A 537-amino-acid chain; its full sequence is Carbamoyl phosphate synthase large chain, C-terminal section (537 aa).

The interval 1–395 (MSKKVVILGS…AYYKAQLSAG (395 aa)) is carbamoyl phosphate synthetic domain. The ATP-grasp domain maps to 122–313 (RELIIELGLK…LAKIATKVAI (192 aa)). ATP contacts are provided by Arg158, Lys197, Leu199, Glu204, Gly229, Val230, His231, Ser232, Gln272, and Glu284. Mg(2+)-binding residues include Gln272, Glu284, and Asn286. The Mn(2+) site is built by Gln272, Glu284, and Asn286. Positions 396–537 (YRLPEKGNLF…VHSLQEIYNI (142 aa)) constitute an MGS-like domain. The tract at residues 396-537 (YRLPEKGNLF…VHSLQEIYNI (142 aa)) is allosteric domain.

The protein belongs to the CarB family. As to quaternary structure, composed of two chains; the small (or glutamine) chain promotes the hydrolysis of glutamine to ammonia, which is used by the large (or ammonia) chain to synthesize carbamoyl phosphate. Tetramer of heterodimers (alpha,beta)4. Requires Mg(2+) as cofactor. It depends on Mn(2+) as a cofactor.

It catalyses the reaction hydrogencarbonate + L-glutamine + 2 ATP + H2O = carbamoyl phosphate + L-glutamate + 2 ADP + phosphate + 2 H(+). The catalysed reaction is hydrogencarbonate + NH4(+) + 2 ATP = carbamoyl phosphate + 2 ADP + phosphate + 2 H(+). It functions in the pathway amino-acid biosynthesis; L-arginine biosynthesis; carbamoyl phosphate from bicarbonate: step 1/1. The protein operates within pyrimidine metabolism; UMP biosynthesis via de novo pathway; (S)-dihydroorotate from bicarbonate: step 1/3. In terms of biological role, large subunit of the glutamine-dependent carbamoyl phosphate synthetase (CPSase). CPSase catalyzes the formation of carbamoyl phosphate from the ammonia moiety of glutamine, carbonate, and phosphate donated by ATP, constituting the first step of 2 biosynthetic pathways, one leading to arginine and/or urea and the other to pyrimidine nucleotides. The large subunit (synthetase) binds the substrates ammonia (free or transferred from glutamine from the small subunit), hydrogencarbonate and ATP and carries out an ATP-coupled ligase reaction, activating hydrogencarbonate by forming carboxy phosphate which reacts with ammonia to form carbamoyl phosphate. In Aquifex aeolicus (strain VF5), this protein is Carbamoyl phosphate synthase large chain, C-terminal section (carB2).